Consider the following 63-residue polypeptide: Large ribosomal subunit protein bL28 (63 aa).

It belongs to the bacterial ribosomal protein bL28 family.

This chain is Large ribosomal subunit protein bL28, found in Mycoplasmopsis synoviae (strain 53) (Mycoplasma synoviae).